Reading from the N-terminus, the 338-residue chain is Glyceraldehyde-3-phosphate dehydrogenase, cytosolic (338 aa).

Residues 14–15, Asp36, and Arg83 each bind NAD(+); that span reads RI. D-glyceraldehyde 3-phosphate-binding positions include 154 to 156, Thr185, 214 to 215, and Arg237; these read SCT and TG. Cys155 serves as the catalytic Nucleophile. Asn319 contacts NAD(+).

This sequence belongs to the glyceraldehyde-3-phosphate dehydrogenase family. In terms of assembly, homotetramer.

The protein localises to the cytoplasm. The catalysed reaction is D-glyceraldehyde 3-phosphate + phosphate + NAD(+) = (2R)-3-phospho-glyceroyl phosphate + NADH + H(+). Its pathway is carbohydrate degradation; glycolysis; pyruvate from D-glyceraldehyde 3-phosphate: step 1/5. In terms of biological role, key enzyme in glycolysis that catalyzes the first step of the pathway by converting D-glyceraldehyde 3-phosphate (G3P) into 3-phospho-D-glyceroyl phosphate. Essential for the maintenance of cellular ATP levels and carbohydrate metabolism. The sequence is that of Glyceraldehyde-3-phosphate dehydrogenase, cytosolic (GAPC) from Ranunculus acris (Meadow buttercup).